The following is a 426-amino-acid chain: UPF0329 protein ECU06_0040 (426 aa).

Residues 136 to 172 (RQRKREEETERSVKELVGDEEKAKSKEEKAKSKEEKA) show a composition bias toward basic and acidic residues. Positions 136–230 (RQRKREEETE…GGKKKSKGGR (95 aa)) are disordered. Residues 220-230 (KGGKKKSKGGR) are compositionally biased toward basic residues.

Belongs to the UPF0329 family.

The chain is UPF0329 protein ECU06_0040 from Encephalitozoon cuniculi (strain GB-M1) (Microsporidian parasite).